Consider the following 681-residue polypeptide: Sodium-dependent phosphate transporter 1 (681 aa).

6 helical membrane-spanning segments follow: residues 25 to 45 (NLWM…SVGA), 66 to 86 (ACIL…AKVS), 106 to 126 (LMAG…VASF), 162 to 182 (IVMS…ILFF), 201 to 221 (ALPI…MYTG), and 234 to 254 (GTIL…WFFV). The disordered stretch occupies residues 266 to 295 (VKSSPSESPLMEKKNNLKDHEETKMAPGDV). Phosphoserine is present on residues serine 269 and serine 273. Basic and acidic residues predominate over residues 275–289 (LMEKKNNLKDHEETK). A run of 4 helical transmembrane segments spans residues 513 to 533 (VSLL…FAHG), 561 to 581 (ATPI…LWVW), 602 to 622 (FSIE…GLPI), and 652 to 672 (IFMA…AIMA).

This sequence belongs to the inorganic phosphate transporter (PiT) (TC 2.A.20) family. As to expression, ubiquitously expressed.

The protein resides in the cell membrane. It catalyses the reaction 2 Na(+)(out) + phosphate(out) = 2 Na(+)(in) + phosphate(in). Its function is as follows. Sodium-phosphate symporter which preferentially transports the monovalent form of phosphate with a stoichiometry of two sodium ions per phosphate ion. May play a role in extracellular matrix and cartilage calcification as well as in vascular calcification. Essential for cell proliferation but this function is independent of its phosphate transporter activity. The chain is Sodium-dependent phosphate transporter 1 (Slc20a1) from Rattus norvegicus (Rat).